A 368-amino-acid polypeptide reads, in one-letter code: MSAELNQPVPRPGILDIAAYVPGKEHVDGVAKVYKLSSNETPLGPSPKAIEAFSAAASHLEIYPDGQAIALRQAIADVHGLNIANILCGNGSDELLGLLCHVYLGAGDEAIITEHGFLVYKIQIMGAGATPVTVKEKDCVVDVDAILAAVTPKTKMVFLANPGNPTGTYVPVAEIRRLQAGLPKHVVLVLDAAYAEYVRKNDYEAGLELVSGNRNVVMTRTFSKVYGLAALRVGWMYAPVDIIDALNRVRGPFNMSAPAIAAGAAAIRDQAFVQKAVAHNALWMEKLVTTFTGLGLTVTPSVANFILIHFPDQDGKRATDADEFLSRRGYILRAVRGYGFPNALRMTVGSEEANLGVIAALTEFMGQA.

Lys-224 carries the N6-(pyridoxal phosphate)lysine modification.

The protein belongs to the class-II pyridoxal-phosphate-dependent aminotransferase family. Histidinol-phosphate aminotransferase subfamily. Homodimer. Requires pyridoxal 5'-phosphate as cofactor.

The catalysed reaction is L-histidinol phosphate + 2-oxoglutarate = 3-(imidazol-4-yl)-2-oxopropyl phosphate + L-glutamate. Its pathway is amino-acid biosynthesis; L-histidine biosynthesis; L-histidine from 5-phospho-alpha-D-ribose 1-diphosphate: step 7/9. This is Histidinol-phosphate aminotransferase from Agrobacterium fabrum (strain C58 / ATCC 33970) (Agrobacterium tumefaciens (strain C58)).